The primary structure comprises 484 residues: UDP-glycosyltransferase 73B4 (484 aa).

Histidine 18 functions as the Proton acceptor in the catalytic mechanism. An anthocyanidin is bound by residues histidine 18 and asparagine 89. The active-site Charge relay is aspartate 129. Alanine 356, glutamine 358, histidine 373, tryptophan 376, asparagine 377, serine 378, and glutamate 381 together coordinate UDP-alpha-D-glucose. Alanine 396 lines the an anthocyanidin pocket. UDP-alpha-D-glucose contacts are provided by glutamate 397 and glutamine 398.

It belongs to the UDP-glycosyltransferase family. Specifically expressed in roots.

It catalyses the reaction a flavonol + UDP-alpha-D-glucose = a flavonol 3-O-beta-D-glucoside + UDP + H(+). Functionally, possesses quercetin 3-O-glucosyltransferase and low 7-O-glucosyltransferase activities in vitro. Also active in vitro on benzoates and benzoate derivatives. Can detoxify the explosive 2,4,6-trinitrotoluene in plant by forming O- or C-glucose conjugates. The polypeptide is UDP-glycosyltransferase 73B4 (UGT73B4) (Arabidopsis thaliana (Mouse-ear cress)).